An 88-amino-acid polypeptide reads, in one-letter code: Large ribosomal subunit protein bL27 (88 aa).

The disordered stretch occupies residues methionine 1–leucine 21.

Belongs to the bacterial ribosomal protein bL27 family.

This Mycobacterium avium (strain 104) protein is Large ribosomal subunit protein bL27.